A 365-amino-acid chain; its full sequence is Peridinin-chlorophyll a-binding protein, chloroplastic (365 aa).

Residues 1–52 (MVRGARKAIAVGVAVAVACGLQKHLNFVPGPRHAAPVAAAAASMMMAPAAFA) constitute a chloroplast transit peptide. 2 consecutive repeat copies span residues 53–215 (DEIG…VPSG) and 216–365 (DKIG…ASQR).

Monomer.

The protein resides in the plastid. The protein localises to the chloroplast. Water-soluble antenna for capture of solar energy in the blue-green range. Peridinin is an asymmetric carotenoid. The sequence is that of Peridinin-chlorophyll a-binding protein, chloroplastic from Symbiodinium sp. (Dinoflagellate).